The primary structure comprises 160 residues: Cyclic pyranopterin monophosphate synthase (160 aa).

Substrate contacts are provided by residues 77–79 (MCH) and 114–115 (ME). The active site involves Asp129.

Belongs to the MoaC family. Homohexamer; trimer of dimers.

The enzyme catalyses (8S)-3',8-cyclo-7,8-dihydroguanosine 5'-triphosphate = cyclic pyranopterin phosphate + diphosphate. Its pathway is cofactor biosynthesis; molybdopterin biosynthesis. Functionally, catalyzes the conversion of (8S)-3',8-cyclo-7,8-dihydroguanosine 5'-triphosphate to cyclic pyranopterin monophosphate (cPMP). The protein is Cyclic pyranopterin monophosphate synthase of Listeria innocua serovar 6a (strain ATCC BAA-680 / CLIP 11262).